The sequence spans 219 residues: Small ribosomal subunit protein uS3c (219 aa).

Positions 47-119 constitute a KH type-2 domain; that stretch reads VRKYVRTAEN…KFIISLAEVE (73 aa).

It belongs to the universal ribosomal protein uS3 family. In terms of assembly, part of the 30S ribosomal subunit.

The protein localises to the plastid. It is found in the chloroplast. This Staurastrum punctulatum (Green alga) protein is Small ribosomal subunit protein uS3c (rps3).